Reading from the N-terminus, the 293-residue chain is Probable porphobilinogen deaminase (293 aa).

S-(dipyrrolylmethanemethyl)cysteine is present on cysteine 233.

The protein belongs to the HMBS family. It depends on dipyrromethane as a cofactor.

It carries out the reaction 4 porphobilinogen + H2O = hydroxymethylbilane + 4 NH4(+). Its pathway is porphyrin-containing compound metabolism; protoporphyrin-IX biosynthesis; coproporphyrinogen-III from 5-aminolevulinate: step 2/4. In terms of biological role, tetrapolymerization of the monopyrrole PBG into the hydroxymethylbilane pre-uroporphyrinogen in several discrete steps. The chain is Probable porphobilinogen deaminase from Saccharolobus islandicus (strain Y.G.57.14 / Yellowstone #1) (Sulfolobus islandicus).